A 303-amino-acid chain; its full sequence is HTH-type transcriptional regulator LinR (303 aa).

Positions 6 to 63 constitute an HTH lysR-type domain; that stretch reads LDFRHLVLLDALLKRHSVSAAARELDLPQPTASHGLARLRKALGDPLLVRARDGMEPT. Positions 23–42 form a DNA-binding region, H-T-H motif; sequence VSAAARELDLPQPTASHGLA.

The protein belongs to the LysR transcriptional regulatory family.

In terms of biological role, positively regulates the transcription of the linD and linE genes that are involved in gamma-hexachlorocyclohexane (gamma-HCH or lindane) degradation. This degradation pathway allows S.japonicum UT26 to grow on gamma-HCH as the sole source of carbon and energy. The polypeptide is HTH-type transcriptional regulator LinR (linR) (Sphingobium indicum (strain DSM 16413 / CCM 7287 / MTCC 6362 / UT26 / NBRC 101211 / UT26S) (Sphingobium japonicum)).